We begin with the raw amino-acid sequence, 142 residues long: Putative arsenate reductase (142 aa).

It belongs to the low molecular weight phosphotyrosine protein phosphatase family.

Reduces arsenate [As(V)] to arsenite [As(III)]. This chain is Putative arsenate reductase (arsC), found in Halobacterium salinarum (strain ATCC 700922 / JCM 11081 / NRC-1) (Halobacterium halobium).